The chain runs to 348 residues: Ion-translocating oxidoreductase complex subunit D (348 aa).

The next 5 helical transmembrane spans lie at 15-35, 36-56, 67-87, 88-108, and 125-145; these read LTAKFMLWVMVAMLPALGMQA, YFFGYGVFIQVFIALLLAVAI, LTAFYVADLSGVLTALILAIS, IPPYAPYWIIVIGIIVALLLA, and VAYALLLVSFPVQMTGWLVPI. At Thr-186 the chain carries FMN phosphoryl threonine. A run of 5 helical transmembrane segments spans residues 212–232, 241–261, 265–285, 298–318, and 320–340; these read LFANGWWQINLAFLAGGLLLI, IPAAMLGMFALLSGLTDLLLP, LNVVSQLFSGAMMFGAFFIAT, LIFGGLIGLFVYLIRYYGNYP, and AVAFSVLLANICVPLIDHYTQ.

Belongs to the NqrB/RnfD family. As to quaternary structure, the complex is composed of six subunits: RnfA, RnfB, RnfC, RnfD, RnfE and RnfG. Requires FMN as cofactor.

The protein localises to the cell inner membrane. Part of a membrane-bound complex that couples electron transfer with translocation of ions across the membrane. This Actinobacillus pleuropneumoniae serotype 3 (strain JL03) protein is Ion-translocating oxidoreductase complex subunit D.